The primary structure comprises 182 residues: Probable RNA 2'-phosphotransferase (182 aa).

The protein belongs to the KptA/TPT1 family.

Removes the 2'-phosphate from RNA via an intermediate in which the phosphate is ADP-ribosylated by NAD followed by a presumed transesterification to release the RNA and generate ADP-ribose 1''-2''-cyclic phosphate (APPR&gt;P). May function as an ADP-ribosylase. This Flavobacterium johnsoniae (strain ATCC 17061 / DSM 2064 / JCM 8514 / BCRC 14874 / CCUG 350202 / NBRC 14942 / NCIMB 11054 / UW101) (Cytophaga johnsonae) protein is Probable RNA 2'-phosphotransferase.